Reading from the N-terminus, the 34-residue chain is Photosystem II reaction center protein M (34 aa).

The chain crosses the membrane as a helical span at residues 5-25 (ILGLIATTLFILIPTSFLLIL).

Belongs to the PsbM family. PSII is composed of 1 copy each of membrane proteins PsbA, PsbB, PsbC, PsbD, PsbE, PsbF, PsbH, PsbI, PsbJ, PsbK, PsbL, PsbM, PsbT, PsbX, PsbY, PsbZ, Psb30/Ycf12, at least 3 peripheral proteins of the oxygen-evolving complex and a large number of cofactors. It forms dimeric complexes.

The protein localises to the plastid. Its subcellular location is the chloroplast thylakoid membrane. In terms of biological role, one of the components of the core complex of photosystem II (PSII). PSII is a light-driven water:plastoquinone oxidoreductase that uses light energy to abstract electrons from H(2)O, generating O(2) and a proton gradient subsequently used for ATP formation. It consists of a core antenna complex that captures photons, and an electron transfer chain that converts photonic excitation into a charge separation. This subunit is found at the monomer-monomer interface. This is Photosystem II reaction center protein M from Pleurastrum terricola (Filamentous green alga).